A 511-amino-acid polypeptide reads, in one-letter code: Maturase K (511 aa).

The protein belongs to the intron maturase 2 family. MatK subfamily.

The protein localises to the plastid. It is found in the chloroplast. Its function is as follows. Usually encoded in the trnK tRNA gene intron. Probably assists in splicing its own and other chloroplast group II introns. This is Maturase K from Hordeum jubatum (Foxtail barley).